The sequence spans 515 residues: uncharacterized protein (515 aa).

The protein belongs to the AllF family.

This is an uncharacterized protein from Escherichia coli (strain K12).